The sequence spans 384 residues: S-adenosylmethionine synthase (384 aa).

H15 contacts ATP. Residue D17 participates in Mg(2+) binding. E43 contributes to the K(+) binding site. L-methionine-binding residues include E56 and Q99. The tract at residues 99–109 (QSADINQGVDR) is flexible loop. ATP contacts are provided by residues 164 to 166 (DAK), 230 to 231 (RF), D239, 245 to 246 (RK), A262, and K266. D239 lines the L-methionine pocket. Residue K270 participates in L-methionine binding.

Belongs to the AdoMet synthase family. As to quaternary structure, homotetramer; dimer of dimers. Requires Mg(2+) as cofactor. K(+) serves as cofactor.

The protein localises to the cytoplasm. The catalysed reaction is L-methionine + ATP + H2O = S-adenosyl-L-methionine + phosphate + diphosphate. Its pathway is amino-acid biosynthesis; S-adenosyl-L-methionine biosynthesis; S-adenosyl-L-methionine from L-methionine: step 1/1. In terms of biological role, catalyzes the formation of S-adenosylmethionine (AdoMet) from methionine and ATP. The overall synthetic reaction is composed of two sequential steps, AdoMet formation and the subsequent tripolyphosphate hydrolysis which occurs prior to release of AdoMet from the enzyme. The chain is S-adenosylmethionine synthase from Haemophilus influenzae (strain PittGG).